Reading from the N-terminus, the 291-residue chain is ATP synthase gamma chain (291 aa).

It belongs to the ATPase gamma chain family. F-type ATPases have 2 components, CF(1) - the catalytic core - and CF(0) - the membrane proton channel. CF(1) has five subunits: alpha(3), beta(3), gamma(1), delta(1), epsilon(1). CF(0) has three main subunits: a, b and c.

It is found in the cell inner membrane. In terms of biological role, produces ATP from ADP in the presence of a proton gradient across the membrane. The gamma chain is believed to be important in regulating ATPase activity and the flow of protons through the CF(0) complex. This is ATP synthase gamma chain from Chlorobium phaeobacteroides (strain DSM 266 / SMG 266 / 2430).